The sequence spans 464 residues: Trehalose-6-phosphate synthase (464 aa).

Position 10 (Arg-10) interacts with D-glucose 6-phosphate. 23 to 24 contacts UDP-alpha-D-glucose; that stretch reads GG. 2 residues coordinate D-glucose 6-phosphate: Tyr-81 and Asp-135. 2 residues coordinate UDP-alpha-D-glucose: Arg-268 and Lys-273. Arg-306 serves as a coordination point for D-glucose 6-phosphate. UDP-alpha-D-glucose is bound at residue 371 to 375; the sequence is LVAKE.

It belongs to the glycosyltransferase 20 family. In terms of assembly, homotetramer.

It catalyses the reaction D-glucose 6-phosphate + UDP-alpha-D-glucose = alpha,alpha-trehalose 6-phosphate + UDP + H(+). It participates in glycan biosynthesis; trehalose biosynthesis. Probably involved in the osmoprotection via the biosynthesis of trehalose. Catalyzes the transfer of glucose from UDP-alpha-D-glucose (UDP-Glc) to D-glucose 6-phosphate (Glc-6-P) to form trehalose-6-phosphate. Acts with retention of the anomeric configuration of the UDP-sugar donor. This is Trehalose-6-phosphate synthase from Sinorhizobium fredii (strain NBRC 101917 / NGR234).